The chain runs to 305 residues: Methionyl-tRNA formyltransferase (305 aa).

A (6S)-5,6,7,8-tetrahydrofolate-binding site is contributed by 111–114; it reads SLLP.

It belongs to the Fmt family.

It carries out the reaction L-methionyl-tRNA(fMet) + (6R)-10-formyltetrahydrofolate = N-formyl-L-methionyl-tRNA(fMet) + (6S)-5,6,7,8-tetrahydrofolate + H(+). Functionally, attaches a formyl group to the free amino group of methionyl-tRNA(fMet). The formyl group appears to play a dual role in the initiator identity of N-formylmethionyl-tRNA by promoting its recognition by IF2 and preventing the misappropriation of this tRNA by the elongation apparatus. In Campylobacter jejuni subsp. doylei (strain ATCC BAA-1458 / RM4099 / 269.97), this protein is Methionyl-tRNA formyltransferase.